Here is a 769-residue protein sequence, read N- to C-terminus: MHSNVGLAGLAGLLATASVCLSAPADQNITSDTYFYGQSPPVYPSPEGTGTGSWAAAYAKAKKFVAQLTPEEKVNLTAGTDANNGCSGNIAAIPRLNFPGLCVSDAGNGLRGTDYVSSWPSGLHVGASWNKALARQRAVQMATEFRKKGVNVLLGPVVGPLGRVAEAGRNWEGFSNDPYLSGALVYETVDGAQSVGVATCTKHYILNEQETNRNPGMEDGVEVAAVSSNIDDKTMHELYLWPFQDAVLAGSASIMCSYNRVNNSYGCQNSKTLNGLLKTELGFQGYAMTDWGAQHAGIAGANAGLDMVMPSTETWGANLTTAISNGTMDASRLDDMATRIIASWYQMNQDSDFPSPGAGMPSDMYAPHQRVIGRDASSKQTLLRGAIEGHVLVKNNHSALPLKSPQLLSVFGYDAKGPNALKQNFNWLSYSPAIQENHTLWVGGGSGANNAAYIDAPIDAIQRQAYEDGTSVLYDISSEDPEVDPTTDACLVFINSYATEGWDRPGLADNSSDTLVKNVARKCANTIVTIHNAGIRVVGEWIDHENVTAVIFAHLPGQDSGRALVELLYGRANPSGKLPYTVAKKAEDYGSLLHPSLPETPYGLFPQSDFDEGVYIDYRAFDRANITAQFEFGFGLSYTSFDYSGLQISNPKQSPQYPPSAAIQQGGNPHLWDNIVTVSAEIKNTGRVAGAEVAQLYIGIPNGPVRQLRGFEKVDVSAGETTQVQFALNRRDLSTWDVEAQQWSLQRGTYRVYVGRSSRDLPLTGSFTL.

The first 22 residues, 1–22, serve as a signal peptide directing secretion; the sequence is MHSNVGLAGLAGLLATASVCLS. N-linked (GlcNAc...) asparagine glycans are attached at residues Asn-28, Asn-75, and Asn-262. Asp-290 is an active-site residue. N-linked (GlcNAc...) asparagine glycosylation is found at Asn-318, Asn-325, Asn-396, Asn-437, Asn-510, Asn-546, and Asn-625.

Belongs to the glycosyl hydrolase 3 family.

It is found in the secreted. The catalysed reaction is Hydrolysis of terminal, non-reducing beta-D-glucosyl residues with release of beta-D-glucose.. It participates in glycan metabolism; cellulose degradation. Its function is as follows. Beta-glucosidases are one of a number of cellulolytic enzymes involved in the degradation of cellulosic biomass. Catalyzes the last step releasing glucose from the inhibitory cellobiose. In Aspergillus fumigatus (strain CBS 144.89 / FGSC A1163 / CEA10) (Neosartorya fumigata), this protein is Probable beta-glucosidase M (bglM).